Reading from the N-terminus, the 414-residue chain is Esterase FrsA (414 aa).

The protein belongs to the FrsA family.

The enzyme catalyses a carboxylic ester + H2O = an alcohol + a carboxylate + H(+). Its function is as follows. Catalyzes the hydrolysis of esters. The protein is Esterase FrsA of Escherichia coli O6:K15:H31 (strain 536 / UPEC).